The sequence spans 78 residues: MASLIQVRDLLALRGRMEATQISHTLHAPQPMIDAMLNQLEIMGKAVRIPEEPDGCLSGSCKSCPEGKACLREWWALR.

The iron-sulfur cluster site is built by Cys56, Cys61, Cys64, and Cys70.

The protein belongs to the FeoC family.

Functionally, may function as a transcriptional regulator that controls feoABC expression. This is Probable [Fe-S]-dependent transcriptional repressor from Salmonella heidelberg (strain SL476).